Consider the following 114-residue polypeptide: Iron-sulfur cluster insertion protein ErpA (114 aa).

Iron-sulfur cluster is bound by residues C42, C106, and C108.

Belongs to the HesB/IscA family. Homodimer. Iron-sulfur cluster is required as a cofactor.

Its function is as follows. Required for insertion of 4Fe-4S clusters for at least IspG. This chain is Iron-sulfur cluster insertion protein ErpA, found in Serratia proteamaculans (strain 568).